A 151-amino-acid chain; its full sequence is Cytochrome c-type biogenesis protein CcmE 1 (151 aa).

Residues 1 to 8 are Cytoplasmic-facing; sequence MNPLRKKR. Residues 9-29 traverse the membrane as a helical; Signal-anchor for type II membrane protein segment; sequence LIIILAILVGVGAAVGLALSA. Residues 30–151 lie on the Periplasmic side of the membrane; it reads LQQNINLFYT…QSAPTPAKEG (122 aa). Heme-binding residues include His-124 and Tyr-128. Positions 131 to 151 are disordered; that stretch reads PEVTKALKDSGQSAPTPAKEG.

Belongs to the CcmE/CycJ family.

It is found in the cell inner membrane. In terms of biological role, heme chaperone required for the biogenesis of c-type cytochromes. Transiently binds heme delivered by CcmC and transfers the heme to apo-cytochromes in a process facilitated by CcmF and CcmH. The sequence is that of Cytochrome c-type biogenesis protein CcmE 1 from Pseudomonas fluorescens (strain Pf0-1).